We begin with the raw amino-acid sequence, 533 residues long: MESERSQRMGNACIPLKRIAYCLCLLSALLLTEGKKPAKPKCPAVCTCTKDNALCENARSIPRTVPPDVISLLFTSNSFDVISDDAFIGLPHLEYLFIENNNIKSISRHTFRGLKSLIHLSLANNNLQTLPKDIFKGLDSLTNVDLRGNSFNCDCKLKWLVEWLSHTNATVEDIYCEGPPEYKKRKINSLSSKDFDCIITEFAKSQDLPYQSLSIDTFSYMNDEYVVIAQPFTGKCIFLEWDHVEKTFRNYDNITGTSTVVCKPIVIETQLYVIVAQLFGGSHIYKRDSFANKFIKIQDIEILKIRKPNDIETFKIENNWYFVVADSSKAGFTTIYKWNGNGFYSHQSLHAWYRDTDVEYLEIARTPQTLRTPHLILSSSSQRPVIYQWNKAIQLFTNQTDIPNMEDVYAVKHFSVKGDVYICLTRFIGDSKVMKWGGSSFQDIQRMPSRGSMVFQPLQINNYQYAILGSDYSFTQVYNWDAEKAKFVKFQELNVQAPRSFTHVSINKRNFLFASSFKGNTQIYKHVIVDLSA.

The N-terminal stretch at 1 to 34 (MESERSQRMGNACIPLKRIAYCLCLLSALLLTEG) is a signal peptide. The 38-residue stretch at 35–72 (KKPAKPKCPAVCTCTKDNALCENARSIPRTVPPDVISL) folds into the LRRNT domain. 2 LRR repeats span residues 92–113 (HLEY…TFRG) and 116–137 (SLIH…IFKG). The LRRCT domain occupies 149–199 (NSFNCDCKLKWLVEWLSHTNATVEDIYCEGPPEYKKRKINSLSSKDFDCII). Residue Asn168 is glycosylated (N-linked (GlcNAc...) asparagine). EAR repeat units lie at residues 201–243 (EFAK…EWDH), 247–289 (TFRN…KRDS), 293–340 (KFIK…KWNG), 342–391 (GFYS…QWNK), 395–438 (LFTN…KWGG), 440–482 (SFQD…NWDA), and 486–528 (KFVK…KHVI). Asn253 carries N-linked (GlcNAc...) asparagine glycosylation. Residue Asn398 is glycosylated (N-linked (GlcNAc...) asparagine).

In terms of assembly, oligomer. Interacts with KCNA1 within a complex containing KCNA1, KCNA4 and KCNAB1. Part of a complex containing ADAM22, DLG4/PSD95 and CACNG2 (stargazin). Can bind to ADAM11 and ADAM23. Glycosylated.

It localises to the secreted. Its subcellular location is the synapse. It is found in the cytoplasm. Its function is as follows. Regulates voltage-gated potassium channels assembled from KCNA1, KCNA4 and KCNAB1. It slows down channel inactivation by precluding channel closure mediated by the KCNAB1 subunit. Ligand for ADAM22 that positively regulates synaptic transmission mediated by AMPA-type glutamate receptors. Plays a role in suppressing the production of MMP1/3 through the phosphatidylinositol 3-kinase/ERK pathway. The protein is Leucine-rich glioma-inactivated protein 1 (LGI1) of Bos taurus (Bovine).